We begin with the raw amino-acid sequence, 362 residues long: Abnormal cell migration protein 13 (362 aa).

Residues 1 to 20 (MTKLLIALILFSICWKPYSA) form the signal peptide. Residues 21 to 237 (EPIASFFDGL…ELDPLTTVSG (217 aa)) lie on the Extracellular side of the membrane. Disulfide bonds link cysteine 36-cysteine 68 and cysteine 98-cysteine 136. One can recognise a CUB domain in the interval 36-175 (CKARLDRRLT…KGFKLHWGSF (140 aa)). A glycan (N-linked (GlcNAc...) asparagine) is linked at asparagine 63. 2 N-linked (GlcNAc...) asparagine glycosylation sites follow: asparagine 145 and asparagine 161. The 44-residue stretch at 182 to 225 (NCVTGEFSCGNGECIPIESACDRFADCSNGEDLIHSRQMAANCQ) folds into the LDL-receptor class A domain. 3 disulfide bridges follow: cysteine 183–cysteine 195, cysteine 190–cysteine 208, and cysteine 202–cysteine 224. A helical membrane pass occupies residues 238-258 (VFVLLFSATIILSLCGFIMFV). Residues 259–362 (CCLCKCLKST…VRNDVHRNLL (104 aa)) are Cytoplasmic-facing. Positions 275–311 (SSHTTTTTATDYKPDPPQFYPPSPPKMPPPSAASSYT) are disordered. The segment covering 289–305 (DPPQFYPPSPPKMPPPS) has biased composition (pro residues).

In terms of assembly, interacts with abl-1 (via SH2 and SH3 domains); the interaction is direct. Interacts with sem-5; the interaction is direct. In terms of tissue distribution, expressed in pharyngeal-intestinal valve cells and ventral cord neurons.

The protein resides in the cell membrane. It is found in the perikaryon. Its subcellular location is the cell projection. It localises to the axon. The protein localises to the dendrite. Its function is as follows. Probable receptor that acts as an upstream signaling protein to promote the guidance, migration and positioning of the right Q neuroblast (QR) and its descendants along the anteroposterior body axis, and also the anterior migration of BDU interneurons during larval development. Associates with and recruits the downstream components tyrosine kinase abl-1 and the tyrosine kinase adapter protein sem-5 to the leading edge of migrating Q neuroblasts and their descendants to activate signaling through the two parallel wve-1 and wsp-1 pathways, respectively, and direct migration along the anteroposterior body axis. Involved in cytoskeleton dynamics regulating the organization of the actin cytoskeleton at the leading edge of migrating cells to ensure correct Q cell polarity and promote migration. Role in cytoskeleton organization may be by activation of the wve-1 and wsp-1 pathways which recruit the Arp2/3 complex to the leading edge of migrating cells. Plays a role in regulating the asymmetric distribution of the actin cytoskeleton-binding protein cor-1 in Q neuroblasts which is required for the anterior migration of QR neuroblasts. The chain is Abnormal cell migration protein 13 from Caenorhabditis elegans.